Here is a 718-residue protein sequence, read N- to C-terminus: Methionine--tRNA ligase (718 aa).

Positions 27-37 match the 'HIGH' region motif; that stretch reads PYANGQIHIGH. Zn(2+) contacts are provided by Cys158, Cys161, Cys171, and Cys174. Positions 348–352 match the 'KMSKS' region motif; the sequence is KMSKS. Lys351 serves as a coordination point for ATP. In terms of domain architecture, tRNA-binding spans 612-718; the sequence is DFAKIDLRIA…SGAKPGMRVK (107 aa).

The protein belongs to the class-I aminoacyl-tRNA synthetase family. MetG type 1 subfamily. In terms of assembly, homodimer. Zn(2+) serves as cofactor.

It localises to the cytoplasm. It carries out the reaction tRNA(Met) + L-methionine + ATP = L-methionyl-tRNA(Met) + AMP + diphosphate. Is required not only for elongation of protein synthesis but also for the initiation of all mRNA translation through initiator tRNA(fMet) aminoacylation. This is Methionine--tRNA ligase from Burkholderia cenocepacia (strain ATCC BAA-245 / DSM 16553 / LMG 16656 / NCTC 13227 / J2315 / CF5610) (Burkholderia cepacia (strain J2315)).